The sequence spans 388 residues: N-acetylneuraminate epimerase (388 aa).

Positions 1–26 (MFSLIRAKRLAIGIAALAWSTGAVMA) are cleaved as a signal peptide. Kelch repeat units lie at residues 48-92 (MAYV…AAAG), 94-147 (KIFA…VGLA), 149-186 (GRIA…KLVD), 187-232 (SYMG…ATMG), 236-285 (FLLV…VAGA), 307-356 (ANAA…DAPG), and 358-387 (LLVV…LSVE). Catalysis depends on E242, which acts as the Proton acceptor.

It belongs to the NanM family. As to quaternary structure, homodimer.

Its subcellular location is the periplasm. It catalyses the reaction N-acetyl-alpha-neuraminate = N-acetyl-beta-neuraminate. In terms of biological role, converts alpha-N-acetylneuranimic acid (Neu5Ac) to the beta-anomer, accelerating the equilibrium between the alpha- and beta-anomers. Probably facilitates sialidase-negative bacteria to compete successfully for limited amounts of extracellular Neu5Ac, which is likely taken up in the beta-anomer. In addition, the rapid removal of sialic acid from solution might be advantageous to the bacterium to damp down host responses. The sequence is that of N-acetylneuraminate epimerase from Brucella melitensis biotype 1 (strain ATCC 23456 / CCUG 17765 / NCTC 10094 / 16M).